We begin with the raw amino-acid sequence, 391 residues long: Chaperone protein DnaJ (391 aa).

One can recognise a J domain in the interval 6–71 (CYYEVLKVER…NKRARYDQYG (66 aa)). Residues 137–215 (GCHKDIVFRR…CRGTGTQNEK (79 aa)) form a CR-type zinc finger. Zn(2+) is bound by residues Cys-150, Cys-153, Cys-167, Cys-170, Cys-189, Cys-192, Cys-203, and Cys-206. CXXCXGXG motif repeat units follow at residues 150–157 (CDTCDGSG), 167–174 (CTMCGGQG), 189–196 (CPTCKGAG), and 203–210 (CGKCRGTG). The segment at 372 to 391 (FFDPEPEEAGTGSTDTEKDS) is disordered.

It belongs to the DnaJ family. As to quaternary structure, homodimer. Zn(2+) serves as cofactor.

The protein localises to the cytoplasm. Its function is as follows. Participates actively in the response to hyperosmotic and heat shock by preventing the aggregation of stress-denatured proteins and by disaggregating proteins, also in an autonomous, DnaK-independent fashion. Unfolded proteins bind initially to DnaJ; upon interaction with the DnaJ-bound protein, DnaK hydrolyzes its bound ATP, resulting in the formation of a stable complex. GrpE releases ADP from DnaK; ATP binding to DnaK triggers the release of the substrate protein, thus completing the reaction cycle. Several rounds of ATP-dependent interactions between DnaJ, DnaK and GrpE are required for fully efficient folding. Also involved, together with DnaK and GrpE, in the DNA replication of plasmids through activation of initiation proteins. The chain is Chaperone protein DnaJ from Rhodopirellula baltica (strain DSM 10527 / NCIMB 13988 / SH1).